The sequence spans 77 residues: Large ribosomal subunit protein eL20 (77 aa).

This sequence belongs to the eukaryotic ribosomal protein eL20 family. As to quaternary structure, part of the 50S ribosomal subunit. Binds 23S rRNA.

This chain is Large ribosomal subunit protein eL20, found in Thermococcus gammatolerans (strain DSM 15229 / JCM 11827 / EJ3).